Consider the following 229-residue polypeptide: Potassium/proton antiporter CemA (229 aa).

3 helical membrane passes run 6-26, 107-127, and 189-209; these read AFIP…ISLC, ILHF…SFWG, and ILSG…KYWI.

The protein belongs to the CemA family.

It is found in the plastid. The protein resides in the chloroplast inner membrane. The catalysed reaction is K(+)(in) + H(+)(out) = K(+)(out) + H(+)(in). In terms of biological role, contributes to K(+)/H(+) antiport activity by supporting proton efflux to control proton extrusion and homeostasis in chloroplasts in a light-dependent manner to modulate photosynthesis. Prevents excessive induction of non-photochemical quenching (NPQ) under continuous-light conditions. Indirectly promotes efficient inorganic carbon uptake into chloroplasts. In Olimarabidopsis pumila (Dwarf rocket), this protein is Potassium/proton antiporter CemA.